We begin with the raw amino-acid sequence, 174 residues long: Methylamine utilization protein MauL (174 aa).

Its pathway is one-carbon metabolism; methylamine degradation. In terms of biological role, probably involved in TTQ prosthetic group biosynthesis. The sequence is that of Methylamine utilization protein MauL (mauL) from Methylophilus methylotrophus (Bacterium W3A1).